Consider the following 406-residue polypeptide: Protein ALP1-like (406 aa).

The Nuclear localization signal signature appears at 8-15 (KKKKRAEK). Residues 187-353 (IDITHIVMNL…IIFVCCLLHN (167 aa)) form the DDE Tnp4 domain. A divalent metal cation is bound by residues Asp188, Asp240, and Asp279.

This sequence belongs to the HARBI1 family. Requires a divalent metal cation as cofactor.

Its subcellular location is the nucleus. Transposase-derived protein that may have nuclease activity. The protein is Protein ALP1-like of Arabidopsis thaliana (Mouse-ear cress).